A 255-amino-acid polypeptide reads, in one-letter code: Large ribosomal subunit protein uL4 (255 aa).

Belongs to the universal ribosomal protein uL4 family. Part of the 50S ribosomal subunit.

Its function is as follows. One of the primary rRNA binding proteins, this protein initially binds near the 5'-end of the 23S rRNA. It is important during the early stages of 50S assembly. It makes multiple contacts with different domains of the 23S rRNA in the assembled 50S subunit and ribosome. Forms part of the polypeptide exit tunnel. This Thermoplasma volcanium (strain ATCC 51530 / DSM 4299 / JCM 9571 / NBRC 15438 / GSS1) protein is Large ribosomal subunit protein uL4.